Reading from the N-terminus, the 415-residue chain is MKSDSEGHKSSSKIQIHKGKILLKPRSWVNLGYSIANSEKETFFLKNAIPGETVDTVLLKRSGSLFWGVASEIQEVSSERIPSDCSIFPRCGGCSYRHVSYQKELEIKKFLLQETLEHFLSKKHIQIPEIEILSGDPNGYRNTAQIQLGFAGNQRLAGFYEEFSHSIVNLPEEGCKNLPQEMNFAFAEFLKQEVKGSKQILKSKTLSFRLEGTKVISYKKKSVSFSENIRIPELKRIVWEIPAGGFSQVNRYLIAPWLEKIFELVPNNQNRILELYCGSGLIAIALKSKTTSWLGYEISSDCVQQAKRNVLLNGISSCDFKTLNLETDWIDSEEVLNSSFWIMNPPRAGLSKKVLQTLIKTSPNGFLYSSCNHTTLVRDLSLFLNKDYKLSNVTLVDFFPRTKHFEVIVKVEKKD.

Positions 85, 91, 94, and 175 each coordinate [4Fe-4S] cluster. S-adenosyl-L-methionine is bound by residues Gln248, Tyr276, Glu297, and Asn344. The active-site Nucleophile is Cys371.

This sequence belongs to the class I-like SAM-binding methyltransferase superfamily. RNA M5U methyltransferase family.

This is an uncharacterized protein from Leptospira interrogans serogroup Icterohaemorrhagiae serovar Lai (strain 56601).